Consider the following 294-residue polypeptide: MSRWKDMNKDELERQFSPSQWSHRMSADDVIKSHVTALKEGTERARGLAQTLLNVPYGEGEGEKLDVYVPTTTSLDVPLVIYLHGGYWQFLSKEESGFMAVPLVHKGVVVVAVGYDIAPKGNMDVMVSQVRRSVVSVIQQYSHISGLYLCGHSAGAHLAAMILSTDWSQYSVTPQIKGAFLVSGIYDLLPILSTYVNEPLKMTEEVALRNSPSQLVPQLKLSSSNCDIVVAVAQNDSPEFRKQSEDYYKALESTEGLKVTLEDVPNTDHFNIIEQLVDGDYHLTQLLLKMMGKS.

Residues 1–14 show a composition bias toward basic and acidic residues; sequence MSRWKDMNKDELER. The interval 1-20 is disordered; it reads MSRWKDMNKDELERQFSPSQ. The HGGXW signature appears at 84–88; it reads HGGYW. Ser153 functions as the Nucleophile in the catalytic mechanism. Active-site residues include Asp236 and His269.

The protein belongs to the kynurenine formamidase family. In terms of assembly, homodimer.

It localises to the cytoplasm. The protein localises to the cytosol. The protein resides in the nucleus. It carries out the reaction N-formyl-L-kynurenine + H2O = L-kynurenine + formate + H(+). Its pathway is amino-acid degradation; L-tryptophan degradation via kynurenine pathway; L-kynurenine from L-tryptophan: step 2/2. Catalyzes the hydrolysis of N-formyl-L-kynurenine to L-kynurenine, the second step in the kynurenine pathway of tryptophan degradation. Kynurenine may be further oxidized to nicotinic acid, NAD(H) and NADP(H). Required for elimination of toxic metabolites. The polypeptide is Kynurenine formamidase (afmid) (Salmo salar (Atlantic salmon)).